A 98-amino-acid polypeptide reads, in one-letter code: UPF0213 protein in ldhD 5'region (98 aa).

Residues 7-84 (NGFYFYVLWC…KKQSRKEKLK (78 aa)) form the GIY-YIG domain.

The protein belongs to the UPF0213 family.

This chain is UPF0213 protein in ldhD 5'region, found in Pediococcus acidilactici.